An 862-amino-acid polypeptide reads, in one-letter code: Protein translocase subunit SecA (862 aa).

Residues Gln86, 104–108, and Asp499 each bind ATP; that span reads GEGKT. 4 residues coordinate Zn(2+): Cys848, Cys850, Cys859, and His860.

Belongs to the SecA family. As to quaternary structure, monomer and homodimer. Part of the essential Sec protein translocation apparatus which comprises SecA, SecYEG and auxiliary proteins SecDF-YajC and YidC. It depends on Zn(2+) as a cofactor.

The protein resides in the cell inner membrane. It localises to the cytoplasm. The enzyme catalyses ATP + H2O + cellular proteinSide 1 = ADP + phosphate + cellular proteinSide 2.. Functionally, part of the Sec protein translocase complex. Interacts with the SecYEG preprotein conducting channel. Has a central role in coupling the hydrolysis of ATP to the transfer of proteins into and across the cell membrane, serving both as a receptor for the preprotein-SecB complex and as an ATP-driven molecular motor driving the stepwise translocation of polypeptide chains across the membrane. The polypeptide is Protein translocase subunit SecA (Ehrlichia canis (strain Jake)).